Consider the following 2496-residue polypeptide: Hornerin (2496 aa).

Residues 1–81 are S-100-like; sequence MPKLLESIVT…TEYLLMILKL (81 aa). 2 EF-hand domains span residues 13-48 and 49-84; these read DVFY…LKNP and DDPD…LTKA. Positions 27, 32, 62, 64, 66, 68, and 73 each coordinate Ca(2+). A s (spacer) region spans residues 82–98; sequence TKACNKIIGKDYCQASG. Residues 97 to 2496 form a disordered region; sequence SGSKQKNHSH…SGQTSGCGSG (2400 aa). One copy of the 1; truncated repeat lies at 99–145; it reads SKQKNHSHQHQEEQSKKETENKEQKGSISSSAGENDSYSRGSRGSNK. Basic and acidic residues predominate over residues 107–123; it reads QHQEEQSKKETENKEQK. The span at 124-134 shows a compositional bias: polar residues; that stretch reads GSISSSAGEND. The span at 144 to 153 shows a compositional bias: basic residues; the sequence is NKSKSKKLRK. Tandem repeats lie at residues 146–231, 232–321, 326–400, 401–491, 492–577, 578–668, 669–748, 749–839, 840–926, 927–1017, 1018–1097, 1098–1188, 1189–1274, 1275–1365, 1366–1445, 1446–1536, 1537–1622, 1623–1713, 1714–1793, 1794–1884, 1885–1970, 1971–2061, 2062–2141, 2142–2232, 2233–2312, 2313–2403, and 2410–2496. Composition is skewed to low complexity over residues 183-194, 200-246, and 270-286; these read SGFSNSSGNGRP, SGFP…SGHS, and RESS…SEEP. 2 stretches are compositionally biased toward polar residues: residues 294-319 and 326-355; these read RKNS…QGFG and SGQS…SSES. Composition is skewed to low complexity over residues 362 to 379, 394 to 415, and 423 to 448; these read VSGS…STSG, SSGS…SGQS, and SGSR…QQFG. A compositionally biased stretch (gly residues) spans 449–464; that stretch reads SGSGRSSGFSQGGSGQ. Positions 465-565 are enriched in low complexity; that stretch reads GRSSRGGQQG…GQTSSSTRQG (101 aa). Serine 506 and serine 508 each carry phosphoserine. Over residues 566–576 the composition is skewed to gly residues; the sequence is SGQGQASGSGR. 2 stretches are compositionally biased toward low complexity: residues 577–593 and 600–625; these read YGAS…GQST and SGSR…QRYG. Residues 626 to 641 are compositionally biased toward gly residues; sequence SGSGESSGFSQGGSGQ. Low complexity-rich tracts occupy residues 642–670 and 679–713; these read GRSS…SRHG and SGQQ…GSGS. Position 646 is an omega-N-methylarginine (arginine 646). Residue serine 716 is modified to Phosphoserine. Residues 723-736 are compositionally biased toward low complexity; that stretch reads GSTSGQTASSTRQG. A compositionally biased stretch (gly residues) spans 737–747; the sequence is SGQGQASGSGR. Low complexity-rich tracts occupy residues 748-764, 771-796, 804-884, and 891-914; these read CGAS…GQST, SGSR…QRFG, GFSQ…SRPA, and SGRS…TRQG. Phosphoserine is present on serine 815. A compositionally biased stretch (gly residues) spans 915 to 925; it reads SGQGQASGSGR. Composition is skewed to low complexity over residues 926–942 and 949–974; these read YGAS…GQST and SGSR…QRYG. The segment covering 975 to 990 has biased composition (gly residues); it reads SGSGESSGFSQGGSGQ. Composition is skewed to low complexity over residues 991 to 1019, 1028 to 1062, and 1072 to 1085; these read GRSS…SRHG, SGQQ…GSGS, and GSTS…TRQG. Arginine 995 carries the post-translational modification Omega-N-methylarginine. Positions 1086–1096 are enriched in gly residues; the sequence is SGQGQASGSGR. 3 stretches are compositionally biased toward low complexity: residues 1097 to 1113, 1120 to 1145, and 1153 to 1262; these read CGAS…GQST, SGSR…QRFG, and GFSQ…TRQG. A Phosphoserine modification is found at serine 1229. Positions 1263–1273 are enriched in gly residues; that stretch reads SGQGQASGSGR. Positions 1281–1292 are enriched in polar residues; the sequence is TSGCRSGQSTRY. Low complexity predominate over residues 1298-1322; it reads GSRNSSTQSRGRSTSRESSTSQRYG. Over residues 1323–1338 the composition is skewed to gly residues; it reads SGSGESSGFSQGGSGQ. Low complexity-rich tracts occupy residues 1339–1367, 1376–1410, and 1420–1433; these read GRSS…SRHG, SGQQ…GSGS, and GSTS…TRQG. Residue arginine 1343 is modified to Omega-N-methylarginine. A compositionally biased stretch (gly residues) spans 1434 to 1444; sequence SGQGQASGSGR. Low complexity-rich tracts occupy residues 1445–1461, 1468–1493, and 1501–1610; these read CGAS…GQST, SGSR…QRFG, and GFSQ…TRQG. Residues serine 1551 and serine 1553 each carry the phosphoserine modification. Residues 1611-1621 are compositionally biased toward gly residues; sequence SGQGQASGSGR. Composition is skewed to low complexity over residues 1622–1631 and 1645–1670; these read YGASSGQTSG and SGSR…QRCG. The residue at position 1650 (serine 1650) is a Phosphoserine. The span at 1671-1686 shows a compositional bias: gly residues; it reads SGSGESSGFSQGGSGQ. 3 stretches are compositionally biased toward low complexity: residues 1687-1715, 1724-1758, and 1768-1781; these read GRSS…SRHG, SGQQ…GSGS, and GSTS…TRQG. At arginine 1691 the chain carries Omega-N-methylarginine. Residues 1782–1792 are compositionally biased toward gly residues; sequence SGQGQASGSGR. Positions 1800–1811 are enriched in polar residues; it reads TSGCGSDQSTRY. 2 stretches are compositionally biased toward low complexity: residues 1816–1841 and 1849–1958; these read SGSR…QRFG and GFSQ…TRQG. Gly residues predominate over residues 1959-1969; it reads SGQGQASGSGR. Composition is skewed to low complexity over residues 1970–1986 and 1993–2018; these read YGAS…GQST and SGSR…QRYG. Serine 2011 carries the phosphoserine modification. The span at 2019–2034 shows a compositional bias: gly residues; that stretch reads SGSGESSGFSQGGSGQ. Composition is skewed to low complexity over residues 2035–2063 and 2072–2106; these read GRSS…SRHG and SGQQ…GSGS. Arginine 2039 carries the post-translational modification Omega-N-methylarginine. A phosphoserine mark is found at serine 2109 and serine 2124. Low complexity predominate over residues 2116-2129; it reads GSTSGQTASSTRQG. Residues 2130-2140 show a composition bias toward gly residues; sequence SGQGQASGSGR. Composition is skewed to low complexity over residues 2141–2157 and 2164–2189; these read CGAS…GQST and SGSR…QRYG. Over residues 2190-2205 the composition is skewed to gly residues; it reads SGSGESSGFSQGGSGQ. 2 stretches are compositionally biased toward low complexity: residues 2206-2234 and 2243-2300; these read GRSS…SRHG and SGQQ…TRQG. Position 2210 is an omega-N-methylarginine (arginine 2210). Over residues 2301-2311 the composition is skewed to gly residues; it reads SGQGQASGSGR. 2 stretches are compositionally biased toward low complexity: residues 2312-2328 and 2335-2360; these read YGAS…GQST and SGSR…QRYG. The residue at position 2353 (serine 2353) is a Phosphoserine. Residues 2361-2376 show a composition bias toward gly residues; the sequence is SGSGESSGFSQGGSGQ. 3 stretches are compositionally biased toward low complexity: residues 2377–2405, 2414–2448, and 2458–2471; these read GRSS…SRHG, SGQQ…GSGS, and GSTS…TRQG. Arginine 2381 is modified (omega-N-methylarginine). Gly residues predominate over residues 2472–2482; it reads SGQGQASGSGR.

Belongs to the S100-fused protein family. This sequence in the N-terminal section; belongs to the S-100 family. Post-translationally, processed during the process of epidermal differentiation. Forms covalent cross-links mediated by transglutaminase TGM3, between glutamine and the epsilon-amino group of lysine residues (in vitro). As to expression, embryonic skin. Highest level in the adult forestomach followed by the skin. Lower levels in the tongue, esophagus. Detected in the granular and cornified layers of the mature epidermis.

The protein localises to the cytoplasmic granule. In terms of biological role, component of the epidermal cornified cell envelopes. This Mus musculus (Mouse) protein is Hornerin (Hrnr).